We begin with the raw amino-acid sequence, 341 residues long: MSTNIAINGMGRIGRMVLRIALQNKNLNVVAINASYPPETIAHLINYDTTHGKYNLKVEPIENGLQVGDHKIKLVADRNPENLPWKELDIDIAIDATGKFNHGDKAIAHIKAGAKKVLLTGPSKGGHVQMVVKGVNDDQLDIEAFDIFSNASCTTNCIGPVAKVLNNQFGIVNGLMTTVHAITNDQKNIDNPHKDLRRARSCNESIIPTSTGAAKALKEVLPELEGKLHGMALRVPTKNVSLVDLVVDLEKEVTAEEVNQAFENAGLEGIIEVEHQPLVSVDFNTNPHSAIIDAKSTMVMSGNKVKVIAWYDNEWGYSNRVVDVAEQIGALLTSKETVSAS.

Residues 12-13 (RI), arginine 78, and threonine 120 each bind NAD(+). Residues 152-154 (SCT) and threonine 183 each bind D-glyceraldehyde 3-phosphate. The Nucleophile role is filled by cysteine 153. Residue asparagine 184 participates in NAD(+) binding. D-glyceraldehyde 3-phosphate-binding positions include arginine 198, 211-212 (TG), and arginine 234. NAD(+) is bound at residue asparagine 313.

This sequence belongs to the glyceraldehyde-3-phosphate dehydrogenase family. As to quaternary structure, homotetramer.

It localises to the cytoplasm. The enzyme catalyses D-glyceraldehyde 3-phosphate + phosphate + NAD(+) = (2R)-3-phospho-glyceroyl phosphate + NADH + H(+). The protein operates within carbohydrate degradation; glycolysis; pyruvate from D-glyceraldehyde 3-phosphate: step 1/5. Its function is as follows. Catalyzes the oxidative phosphorylation of glyceraldehyde 3-phosphate (G3P) to 1,3-bisphosphoglycerate (BPG) using the cofactor NAD. The first reaction step involves the formation of a hemiacetal intermediate between G3P and a cysteine residue, and this hemiacetal intermediate is then oxidized to a thioester, with concomitant reduction of NAD to NADH. The reduced NADH is then exchanged with the second NAD, and the thioester is attacked by a nucleophilic inorganic phosphate to produce BPG. The protein is Glyceraldehyde-3-phosphate dehydrogenase 2 (gapA2) of Staphylococcus aureus (strain MRSA252).